The chain runs to 363 residues: MKIGVFVPIGNNGWLISTHAPQYMPTFELNKAIVQKAEHYHFDFALSMIKLRGFGGKTEFWDHNLESFTLMAGLAAVTSRIQIYATAATLTLPPAIVARMAATIDSISGGRFGVNLVTGWQKPEYEQMGIWPGDDYFSRRYDYLTEYVQVLRDLWGSGKSDFKGDFFTMDDCRVSPQPSVPMKVICAGQSDAGMAFSARYADFNFCFGKGVNTPTAFAPTAARMKQAAEQTGRDVGSYVLFMVIADETDDAARAKWEHYKAGADEEALSWLTEQSQKDTRSGTDTNVRQMADPTSAVNINMGTLVGSYASVARMLDEVATVPGAEGVLLTFDDFLSGIENFGERIQPLMQCRAHLPALTQEVA.

FMN is bound by residues 49–50 (IK), Asn115, Glu124, 140–141 (RY), and Ser190.

The protein belongs to the NtaA/SnaA/DszA monooxygenase family. RutA subfamily.

The catalysed reaction is uracil + FMNH2 + NADH + O2 = (Z)-3-ureidoacrylate + FMN + NAD(+) + H2O + H(+). It catalyses the reaction thymine + FMNH2 + NADH + O2 = (Z)-2-methylureidoacrylate + FMN + NAD(+) + H2O + H(+). Functionally, catalyzes the pyrimidine ring opening between N-3 and C-4 by an unusual flavin hydroperoxide-catalyzed mechanism, adding oxygen atoms in the process to yield ureidoacrylate peracid, that immediately reacts with FMN forming ureidoacrylate and FMN-N(5)-oxide. The FMN-N(5)-oxide reacts spontaneously with NADH to produce FMN. Requires the flavin reductase RutF to regenerate FMN in vivo. The chain is Pyrimidine monooxygenase RutA from Escherichia coli (strain SMS-3-5 / SECEC).